The following is a 357-amino-acid chain: UDP-N-acetylglucosamine--N-acetylmuramyl-(pentapeptide) pyrophosphoryl-undecaprenol N-acetylglucosamine transferase (357 aa).

UDP-N-acetyl-alpha-D-glucosamine contacts are provided by residues 12–14, asparagine 124, arginine 163, serine 189, isoleucine 243, 262–267, and glutamine 288; these read TGG and ALTVSE.

It belongs to the glycosyltransferase 28 family. MurG subfamily.

The protein localises to the cell inner membrane. It carries out the reaction di-trans,octa-cis-undecaprenyl diphospho-N-acetyl-alpha-D-muramoyl-L-alanyl-D-glutamyl-meso-2,6-diaminopimeloyl-D-alanyl-D-alanine + UDP-N-acetyl-alpha-D-glucosamine = di-trans,octa-cis-undecaprenyl diphospho-[N-acetyl-alpha-D-glucosaminyl-(1-&gt;4)]-N-acetyl-alpha-D-muramoyl-L-alanyl-D-glutamyl-meso-2,6-diaminopimeloyl-D-alanyl-D-alanine + UDP + H(+). Its pathway is cell wall biogenesis; peptidoglycan biosynthesis. Its function is as follows. Cell wall formation. Catalyzes the transfer of a GlcNAc subunit on undecaprenyl-pyrophosphoryl-MurNAc-pentapeptide (lipid intermediate I) to form undecaprenyl-pyrophosphoryl-MurNAc-(pentapeptide)GlcNAc (lipid intermediate II). The sequence is that of UDP-N-acetylglucosamine--N-acetylmuramyl-(pentapeptide) pyrophosphoryl-undecaprenol N-acetylglucosamine transferase from Pseudomonas aeruginosa (strain LESB58).